The following is a 123-amino-acid chain: WAP four-disulfide core domain protein 5 (123 aa).

A signal peptide spans 1–24 (MRIQSLLLLGALLAVGSQLPAVFG). 2 WAP domains span residues 27–73 (KGEK…CIPR) and 74–121 (VSVK…RDPA). Cystine bridges form between Cys-34–Cys-62, Cys-41–Cys-66, Cys-49–Cys-61, Cys-55–Cys-70, Cys-81–Cys-109, Cys-88–Cys-113, Cys-96–Cys-108, and Cys-102–Cys-117.

It localises to the secreted. Its function is as follows. Putative acid-stable proteinase inhibitor. The protein is WAP four-disulfide core domain protein 5 (WFDC5) of Macaca mulatta (Rhesus macaque).